The sequence spans 149 residues: Large ribosomal subunit protein bL9 (149 aa).

The protein belongs to the bacterial ribosomal protein bL9 family.

Binds to the 23S rRNA. The chain is Large ribosomal subunit protein bL9 from Clostridioides difficile (strain 630) (Peptoclostridium difficile).